A 174-amino-acid chain; its full sequence is RNA polymerase sigma factor CarQ (174 aa).

The Polymerase core binding signature appears at 39-52 (DLLQATFLSVIRSR). Positions 86-106 (YASREDTATPASAAPDDSDPS) are disordered. A DNA-binding region (H-T-H motif) is located at residues 136–155 (FEEIGALRGISPGAARLRAH).

The protein belongs to the sigma-70 factor family. ECF subfamily.

Sigma factors are initiation factors that promote the attachment of RNA polymerase to specific initiation sites and are then released. This sigma factor regulates genes for the light induced biosynthesis of carotenoids. This Myxococcus xanthus protein is RNA polymerase sigma factor CarQ (carQ).